The primary structure comprises 268 residues: Undecaprenyl-diphosphatase (268 aa).

Transmembrane regions (helical) follow at residues 47–67 (FTIL…FAKL), 83–103 (FVIG…LAGG), 109–129 (LFNP…LLWV), 144–164 (FPLP…IPGV), 184–204 (AAEF…VYDL), 217–237 (LIVA…VKSF), and 246–266 (FTLF…ALAL).

This sequence belongs to the UppP family.

The protein localises to the cell inner membrane. It catalyses the reaction di-trans,octa-cis-undecaprenyl diphosphate + H2O = di-trans,octa-cis-undecaprenyl phosphate + phosphate + H(+). Its function is as follows. Catalyzes the dephosphorylation of undecaprenyl diphosphate (UPP). Confers resistance to bacitracin. In Rhodopseudomonas palustris (strain BisB18), this protein is Undecaprenyl-diphosphatase.